A 66-amino-acid chain; its full sequence is Pancreatic polypeptide prohormone (66 aa).

The residue at position 36 (tyrosine 36) is a Tyrosine amide. Positions 60 to 66 (ELSPMDV) are excised as a propeptide.

This sequence belongs to the NPY family.

It localises to the secreted. In terms of biological role, hormone secreted by pancreatic cells that acts as a regulator of pancreatic and gastrointestinal functions probably by signaling through the G protein-coupled receptor NPY4R2. The chain is Pancreatic polypeptide prohormone (PPY) from Felis catus (Cat).